The chain runs to 273 residues: Large ribosomal subunit protein uL2cz/uL2cy (273 aa).

Disordered regions lie at residues 1–23 and 224–273; these read MAIH…SQVK and NPVD…RRRK.

It belongs to the universal ribosomal protein uL2 family. As to quaternary structure, part of the 50S ribosomal subunit.

The protein localises to the plastid. It is found in the chloroplast. The chain is Large ribosomal subunit protein uL2cz/uL2cy (rpl2-A) from Amborella trichopoda.